Reading from the N-terminus, the 1010-residue chain is Phosphatidylserine decarboxylase proenzyme 2 (1010 aa).

C2 domains lie at 1-114 (MSQA…SSWE) and 247-370 (DFES…DKPC). 3 residues coordinate Ca(2+): aspartate 342, serine 345, and aspartate 348. An EF-hand domain is found at 458 to 493 (LRRQLWMHLLQGNDTQMKGTLDLIELNYFVDCLGSN). Residues aspartate 734, histidine 793, and serine 880 each act as charge relay system; for autoendoproteolytic cleavage activity in the active site. The active-site Schiff-base intermediate with substrate; via pyruvic acid; for decarboxylase activity is the serine 880. Serine 880 is subject to Pyruvic acid (Ser); by autocatalysis.

The protein belongs to the phosphatidylserine decarboxylase family. PSD-B subfamily. Eukaryotic type II sub-subfamily. As to quaternary structure, heterodimer of a large membrane-associated beta subunit and a small pyruvoyl-containing alpha subunit. Interacts with pstB2. This interaction may be a means to structurally tether the donor membrane (ER) harboring PstB2 to acceptor membranes (Golgi/endosomes) harboring PSD2 during PtdSer transport to the site of PtdEtn synthesis. Requires pyruvate as cofactor. Ca(2+) is required as a cofactor. Post-translationally, is synthesized initially as an inactive proenzyme. Formation of the active enzyme involves a self-maturation process in which the active site pyruvoyl group is generated from an internal serine residue via an autocatalytic post-translational modification. Two non-identical subunits are generated from the proenzyme in this reaction, and the pyruvate is formed at the N-terminus of the alpha chain, which is derived from the carboxyl end of the proenzyme. The autoendoproteolytic cleavage occurs by a canonical serine protease mechanism, in which the side chain hydroxyl group of the serine supplies its oxygen atom to form the C-terminus of the beta chain, while the remainder of the serine residue undergoes an oxidative deamination to produce ammonia and the pyruvoyl prosthetic group on the alpha chain. During this reaction, the Ser that is part of the protease active site of the proenzyme becomes the pyruvoyl prosthetic group, which constitutes an essential element of the active site of the mature decarboxylase.

The protein resides in the golgi apparatus membrane. It is found in the endosome membrane. The enzyme catalyses a 1,2-diacyl-sn-glycero-3-phospho-L-serine + H(+) = a 1,2-diacyl-sn-glycero-3-phosphoethanolamine + CO2. The protein operates within phospholipid metabolism; phosphatidylethanolamine biosynthesis; phosphatidylethanolamine from CDP-diacylglycerol: step 2/2. Its function is as follows. Catalyzes the formation of phosphatidylethanolamine (PtdEtn) from phosphatidylserine (PtdSer). Plays a central role in phospholipid metabolism and in the interorganelle trafficking of phosphatidylserine. The protein is Phosphatidylserine decarboxylase proenzyme 2 of Komagataella phaffii (strain GS115 / ATCC 20864) (Yeast).